The following is a 517-amino-acid chain: MDIVGGQNLRQMWDDLAGVYGDKTALIFESCEGIVRQFSYASLNEEINRTANLFYSLGIRKGDRVALHLDNCPEFIFCWFGLAKIGAIMVPINARLLGEESAWILQNSQVSLLVTSAQFYPMYREIRQDNSTPLNHICLIGEQLPADDGVSHFTQLQARQSATLCYTPVLSTDDTAEILFTSGTTSRPKGVVITHYNLRFAGYYSAWQIALRDDDVYMTVMPAFHIDCQCTAAMPAFSAGSTFVLLEKYSARAFWDQVRKYQATVTECIPMMIRTLMVQPAAPTDRQHHLREVMFYLNLSEQEKDDFTERFGVRLLTSYGMTETIVGIIGDRPGDKRRWPSIGRVGFSYEAEIRDDQNRPLPAGEIGEICIKGIPGKTIFKEYYMQPEATAKALEPEGWLHTGDSGYQDEDGYFYFVDRRCNMIKRGGENVSCVELENIISAHPKIQDIVVVGIKDAIRDEAIKAFIVLNEGETLSEAEFFSFCENNMAKFKVPSFMEIRTDLPRNCSGKIIKKNLK.

It belongs to the ATP-dependent AMP-binding enzyme family.

It catalyses the reaction 4-(trimethylamino)butanoate + ATP + CoA = 4-(trimethylamino)butanoyl-CoA + AMP + diphosphate. The enzyme catalyses crotonobetaine + ATP + CoA = crotonobetainyl-CoA + AMP + diphosphate. It carries out the reaction (R)-carnitine + ATP + CoA = (R)-carnitinyl-CoA + AMP + diphosphate. The protein operates within amine and polyamine metabolism; carnitine metabolism. Functionally, catalyzes the transfer of CoA to carnitine, generating the initial carnitinyl-CoA needed for the CaiB reaction cycle. Also has activity toward crotonobetaine and gamma-butyrobetaine. This chain is Crotonobetaine/carnitine--CoA ligase, found in Salmonella heidelberg (strain SL476).